The sequence spans 267 residues: 2-keto-3-deoxy-L-rhamnonate aldolase (267 aa).

Histidine 49 serves as the catalytic Proton acceptor. Glutamine 151 serves as a coordination point for substrate. Glutamate 153 lines the Mg(2+) pocket. Positions 178 and 179 each coordinate substrate. Position 179 (aspartate 179) interacts with Mg(2+).

Belongs to the HpcH/HpaI aldolase family. KDR aldolase subfamily. Homohexamer. The cofactor is Mg(2+).

The catalysed reaction is 2-dehydro-3-deoxy-L-rhamnonate = (S)-lactaldehyde + pyruvate. Its function is as follows. Catalyzes the reversible retro-aldol cleavage of 2-keto-3-deoxy-L-rhamnonate (KDR) to pyruvate and lactaldehyde. The protein is 2-keto-3-deoxy-L-rhamnonate aldolase of Salmonella typhi.